The primary structure comprises 110 residues: Small ribosomal subunit protein uS10 (110 aa).

This sequence belongs to the universal ribosomal protein uS10 family. Part of the 30S ribosomal subunit.

In terms of biological role, involved in the binding of tRNA to the ribosomes. The polypeptide is Small ribosomal subunit protein uS10 (Coxiella burnetii (strain Dugway 5J108-111)).